A 468-amino-acid polypeptide reads, in one-letter code: ATP synthase subunit beta (468 aa).

Residue 148 to 155 participates in ATP binding; it reads GGAGVGKT.

This sequence belongs to the ATPase alpha/beta chains family. In terms of assembly, F-type ATPases have 2 components, CF(1) - the catalytic core - and CF(0) - the membrane proton channel. CF(1) has five subunits: alpha(3), beta(3), gamma(1), delta(1), epsilon(1). CF(0) has three main subunits: a(1), b(2) and c(9-12). The alpha and beta chains form an alternating ring which encloses part of the gamma chain. CF(1) is attached to CF(0) by a central stalk formed by the gamma and epsilon chains, while a peripheral stalk is formed by the delta and b chains.

It is found in the cell inner membrane. The catalysed reaction is ATP + H2O + 4 H(+)(in) = ADP + phosphate + 5 H(+)(out). Produces ATP from ADP in the presence of a proton gradient across the membrane. The catalytic sites are hosted primarily by the beta subunits. The polypeptide is ATP synthase subunit beta (Xanthomonas axonopodis pv. citri (strain 306)).